Consider the following 96-residue polypeptide: Non-specific lipid-transfer protein 2 (96 aa).

The signal sequence occupies residues 1-27; that stretch reads MMRKLAVLVLAVAMVAACGGGVVGVAG. 4 disulfide bridges follow: Cys30-Cys62, Cys38-Cys52, Cys53-Cys88, and Cys64-Cys95.

Its function is as follows. Transfer lipids across membranes. May play a role in plant defense or in the biosynthesis of cuticle layers. This is Non-specific lipid-transfer protein 2 (LTP-2) from Oryza sativa subsp. japonica (Rice).